The primary structure comprises 1390 residues: DNA-directed RNA polymerase subunit beta (1390 aa).

The protein belongs to the RNA polymerase beta chain family. As to quaternary structure, the RNAP catalytic core consists of 2 alpha, 1 beta, 1 beta' and 1 omega subunit. When a sigma factor is associated with the core the holoenzyme is formed, which can initiate transcription.

It carries out the reaction RNA(n) + a ribonucleoside 5'-triphosphate = RNA(n+1) + diphosphate. Functionally, DNA-dependent RNA polymerase catalyzes the transcription of DNA into RNA using the four ribonucleoside triphosphates as substrates. This Rhodopseudomonas palustris (strain HaA2) protein is DNA-directed RNA polymerase subunit beta.